We begin with the raw amino-acid sequence, 119 residues long: Large ribosomal subunit protein uL18 (119 aa).

It belongs to the universal ribosomal protein uL18 family. As to quaternary structure, part of the 50S ribosomal subunit; part of the 5S rRNA/L5/L18/L25 subcomplex. Contacts the 5S and 23S rRNAs.

This is one of the proteins that bind and probably mediate the attachment of the 5S RNA into the large ribosomal subunit, where it forms part of the central protuberance. The protein is Large ribosomal subunit protein uL18 of Paracoccus denitrificans (strain Pd 1222).